The chain runs to 175 residues: Large ribosomal subunit protein uL10 (175 aa).

Belongs to the universal ribosomal protein uL10 family. In terms of assembly, part of the ribosomal stalk of the 50S ribosomal subunit. The N-terminus interacts with L11 and the large rRNA to form the base of the stalk. The C-terminus forms an elongated spine to which L12 dimers bind in a sequential fashion forming a multimeric L10(L12)X complex.

In terms of biological role, forms part of the ribosomal stalk, playing a central role in the interaction of the ribosome with GTP-bound translation factors. In Synechococcus sp. (strain WH7803), this protein is Large ribosomal subunit protein uL10.